Consider the following 452-residue polypeptide: Exodeoxyribonuclease 7 large subunit (452 aa).

The protein belongs to the XseA family. In terms of assembly, heterooligomer composed of large and small subunits.

It is found in the cytoplasm. The catalysed reaction is Exonucleolytic cleavage in either 5'- to 3'- or 3'- to 5'-direction to yield nucleoside 5'-phosphates.. In terms of biological role, bidirectionally degrades single-stranded DNA into large acid-insoluble oligonucleotides, which are then degraded further into small acid-soluble oligonucleotides. The polypeptide is Exodeoxyribonuclease 7 large subunit (Bacillus anthracis (strain A0248)).